Reading from the N-terminus, the 348-residue chain is UDP-3-O-acylglucosamine N-acyltransferase (348 aa).

His-257 acts as the Proton acceptor in catalysis.

It belongs to the transferase hexapeptide repeat family. LpxD subfamily. In terms of assembly, homotrimer.

It catalyses the reaction a UDP-3-O-[(3R)-3-hydroxyacyl]-alpha-D-glucosamine + a (3R)-hydroxyacyl-[ACP] = a UDP-2-N,3-O-bis[(3R)-3-hydroxyacyl]-alpha-D-glucosamine + holo-[ACP] + H(+). Its pathway is bacterial outer membrane biogenesis; LPS lipid A biosynthesis. Catalyzes the N-acylation of UDP-3-O-acylglucosamine using 3-hydroxyacyl-ACP as the acyl donor. Is involved in the biosynthesis of lipid A, a phosphorylated glycolipid that anchors the lipopolysaccharide to the outer membrane of the cell. This chain is UDP-3-O-acylglucosamine N-acyltransferase, found in Bartonella henselae (strain ATCC 49882 / DSM 28221 / CCUG 30454 / Houston 1) (Rochalimaea henselae).